The following is a 269-amino-acid chain: Peptide deformylase 1B, chloroplastic (269 aa).

The transit peptide at 1–51 directs the protein to the chloroplast; that stretch reads MAARLHLRLGPRLRGFASSFAPLLAAHPRALPLSRMGSVAPLAAARARRGF. 2 residues coordinate Fe cation: Cys168 and His210. The active site involves Glu211. His214 serves as a coordination point for Fe cation.

This sequence belongs to the polypeptide deformylase family. As to quaternary structure, homodimer. Fe(2+) serves as cofactor. In terms of tissue distribution, mainly expressed in mature leaves and sheaths.

It is found in the plastid. It localises to the chloroplast stroma. The protein resides in the mitochondrion. It catalyses the reaction N-terminal N-formyl-L-methionyl-[peptide] + H2O = N-terminal L-methionyl-[peptide] + formate. With respect to regulation, inhibited by actinonin. Removes the formyl group from the N-terminal Met of newly synthesized proteins. The sequence is that of Peptide deformylase 1B, chloroplastic (PDF1B) from Oryza sativa subsp. japonica (Rice).